A 204-amino-acid chain; its full sequence is Ras-related protein RABG1 (204 aa).

A GTP-binding site is contributed by 12–19 (GDSGVGKT). Positions 34 to 42 (HNSTIYVDL) match the Effector region motif. GTP is bound by residues 60 to 64 (DTAGQ), 122 to 125 (NKTD), and 155 to 156 (SA). Residues Cys202 and Cys204 are each lipidated (S-geranylgeranyl cysteine). Cys204 bears the Cysteine methyl ester mark.

The protein belongs to the small GTPase superfamily. Rab family.

The protein localises to the cell membrane. Its function is as follows. Intracellular vesicle trafficking and protein transport. The sequence is that of Ras-related protein RABG1 (RABG1) from Arabidopsis thaliana (Mouse-ear cress).